The chain runs to 208 residues: Large ribosomal subunit protein bL25 (208 aa).

This sequence belongs to the bacterial ribosomal protein bL25 family. CTC subfamily. Part of the 50S ribosomal subunit; part of the 5S rRNA/L5/L18/L25 subcomplex. Contacts the 5S rRNA. Binds to the 5S rRNA independently of L5 and L18.

This is one of the proteins that binds to the 5S RNA in the ribosome where it forms part of the central protuberance. The chain is Large ribosomal subunit protein bL25 from Leptothrix cholodnii (strain ATCC 51168 / LMG 8142 / SP-6) (Leptothrix discophora (strain SP-6)).